Consider the following 187-residue polypeptide: Guanylate kinase (187 aa).

Residue Ser2 is modified to N-acetylserine. The region spanning 2–184 is the Guanylate kinase-like domain; it reads SRPIVISGPS…AYKELKDFIF (183 aa). An ATP-binding site is contributed by 9–16; it reads GPSGTGKS. GMP-binding positions include Ser35, 39 to 42, Tyr51, Glu70, 79 to 81, and Asp101; these read RTPR and YGS. Ser149 is subject to Phosphoserine. The residue at position 157 (Tyr157) is a Phosphotyrosine.

Belongs to the guanylate kinase family. As to quaternary structure, monomer.

The enzyme catalyses GMP + ATP = GDP + ADP. Its function is as follows. Catalyzes the reversible transfer of the terminal phosphoryl group of ATP to the acceptor molecule GMP. Essential for recycling GMP and indirectly, cGMP. The chain is Guanylate kinase (GUK1) from Saccharomyces cerevisiae (strain ATCC 204508 / S288c) (Baker's yeast).